Consider the following 272-residue polypeptide: Formamidopyrimidine-DNA glycosylase (272 aa).

The active-site Schiff-base intermediate with DNA is Pro2. The active-site Proton donor is Glu3. Catalysis depends on Lys58, which acts as the Proton donor; for beta-elimination activity. His92, Arg111, and Arg153 together coordinate DNA. The segment at 238-272 (AVYGRQGQSCPRCGGLVERCRLGQRSTFFCPACQR) adopts an FPG-type zinc-finger fold. The active-site Proton donor; for delta-elimination activity is the Arg262.

Belongs to the FPG family. Monomer. Zn(2+) serves as cofactor.

It carries out the reaction Hydrolysis of DNA containing ring-opened 7-methylguanine residues, releasing 2,6-diamino-4-hydroxy-5-(N-methyl)formamidopyrimidine.. The catalysed reaction is 2'-deoxyribonucleotide-(2'-deoxyribose 5'-phosphate)-2'-deoxyribonucleotide-DNA = a 3'-end 2'-deoxyribonucleotide-(2,3-dehydro-2,3-deoxyribose 5'-phosphate)-DNA + a 5'-end 5'-phospho-2'-deoxyribonucleoside-DNA + H(+). Functionally, involved in base excision repair of DNA damaged by oxidation or by mutagenic agents. Acts as a DNA glycosylase that recognizes and removes damaged bases. Has a preference for oxidized purines, such as 7,8-dihydro-8-oxoguanine (8-oxoG). Has AP (apurinic/apyrimidinic) lyase activity and introduces nicks in the DNA strand. Cleaves the DNA backbone by beta-delta elimination to generate a single-strand break at the site of the removed base with both 3'- and 5'-phosphates. This chain is Formamidopyrimidine-DNA glycosylase, found in Laribacter hongkongensis (strain HLHK9).